The chain runs to 29 residues: Beta-theraphotoxin-Gr1a (29 aa).

Disulfide bonds link Cys-2-Cys-16, Cys-9-Cys-21, and Cys-15-Cys-25.

Belongs to the neurotoxin 30 (phrixotoxin) family. As to expression, expressed by the venom gland.

The protein localises to the secreted. Inhibits voltage-gated sodium channels Nav1.1/SCN1A (IC(50)=630 nM), Nav1.2/SCN2A (IC(50)=230 nM), Nav1.3/SCN3A (IC(50)=770 nM), Nav1.4/SCN4A (IC(50)=1290 nM), Nav1.6/SCN8A (IC(50)=630 nM), Nav1.7/SCN9A (IC(50)=15.3-1000 nM) and potassium channels Kv11.1/KCNH2 (IC(50)=4.2 uM). In Grammostola rosea (Chilean rose tarantula), this protein is Beta-theraphotoxin-Gr1a.